The primary structure comprises 408 residues: Peptidase T (408 aa).

Position 78 (His-78) interacts with Zn(2+). The active site involves Asp-80. Asp-141 contributes to the Zn(2+) binding site. The Proton acceptor role is filled by Glu-175. Residues Glu-176, Asp-198, and His-380 each contribute to the Zn(2+) site.

It belongs to the peptidase M20B family. The cofactor is Zn(2+).

It is found in the cytoplasm. It catalyses the reaction Release of the N-terminal residue from a tripeptide.. Functionally, cleaves the N-terminal amino acid of tripeptides. This chain is Peptidase T, found in Clostridium botulinum (strain 657 / Type Ba4).